Reading from the N-terminus, the 126-residue chain is Nascent polypeptide-associated complex protein (126 aa).

Residues 10–77 (PRMMKQMQKM…AKKVAKAEEK (68 aa)) enclose the NAC-A/B domain.

This sequence belongs to the NAC-alpha family. As to quaternary structure, homodimer. Interacts with the ribosome. Binds ribosomal RNA.

Its function is as follows. Contacts the emerging nascent chain on the ribosome. The polypeptide is Nascent polypeptide-associated complex protein (Methanococcus maripaludis (strain C5 / ATCC BAA-1333)).